Consider the following 174-residue polypeptide: Calcineurin subunit B (174 aa).

EF-hand domains are found at residues 21-56 (EEIERLRKRFMKLDKDGSGTIDKNEFLTIPGISSNP), 60-88 (RLMDVFDEDGNGTIDFQEFIMGLSAFSGK), 90-125 (SKLDKLKFAFKIYDIDRDGYIGNGELFIVMKMMVGK), and 131-166 (ELQQIVDKTMMEADEDGDGRLNFHEFKNAVDSKSVA). Ca(2+)-binding residues include Asp34, Asp36, Ser38, Thr40, Glu45, Asp66, Asp68, Asn70, Thr72, Glu77, Asp103, Asp105, Asp107, Tyr109, Glu114, Asp144, Asp146, Asp148, Arg150, and Glu155.

Belongs to the calcineurin regulatory subunit family. As to quaternary structure, composed of a catalytic subunit (A) and a regulatory subunit (B).

Functionally, regulatory subunit of calcineurin, a calcium-dependent, calmodulin stimulated protein phosphatase. Confers calcium sensitivity. The polypeptide is Calcineurin subunit B (CNB1) (Debaryomyces hansenii (strain ATCC 36239 / CBS 767 / BCRC 21394 / JCM 1990 / NBRC 0083 / IGC 2968) (Yeast)).